Consider the following 330-residue polypeptide: NADH-quinone oxidoreductase subunit H (330 aa).

Helical transmembrane passes span L5–L25, I44–L64, F78–I98, V122–A142, V156–I176, I192–F212, M240–I260, F271–W293, and C310–I330.

The protein belongs to the complex I subunit 1 family. As to quaternary structure, NDH-1 is composed of 14 different subunits. Subunits NuoA, H, J, K, L, M, N constitute the membrane sector of the complex.

It localises to the cell inner membrane. The enzyme catalyses a quinone + NADH + 5 H(+)(in) = a quinol + NAD(+) + 4 H(+)(out). In terms of biological role, NDH-1 shuttles electrons from NADH, via FMN and iron-sulfur (Fe-S) centers, to quinones in the respiratory chain. The immediate electron acceptor for the enzyme in this species is believed to be ubiquinone. Couples the redox reaction to proton translocation (for every two electrons transferred, four hydrogen ions are translocated across the cytoplasmic membrane), and thus conserves the redox energy in a proton gradient. This subunit may bind ubiquinone. This chain is NADH-quinone oxidoreductase subunit H, found in Campylobacter curvus (strain 525.92).